The following is a 308-amino-acid chain: Porphobilinogen deaminase (308 aa).

The residue at position 241 (Cys241) is an S-(dipyrrolylmethanemethyl)cysteine.

It belongs to the HMBS family. In terms of assembly, monomer. It depends on dipyrromethane as a cofactor.

It catalyses the reaction 4 porphobilinogen + H2O = hydroxymethylbilane + 4 NH4(+). It functions in the pathway porphyrin-containing compound metabolism; protoporphyrin-IX biosynthesis; coproporphyrinogen-III from 5-aminolevulinate: step 2/4. Its function is as follows. Tetrapolymerization of the monopyrrole PBG into the hydroxymethylbilane pre-uroporphyrinogen in several discrete steps. The protein is Porphobilinogen deaminase of Staphylococcus saprophyticus subsp. saprophyticus (strain ATCC 15305 / DSM 20229 / NCIMB 8711 / NCTC 7292 / S-41).